Here is a 276-residue protein sequence, read N- to C-terminus: Elongation factor Ts (276 aa).

An involved in Mg(2+) ion dislocation from EF-Tu region spans residues threonine 79–valine 82.

This sequence belongs to the EF-Ts family.

Its subcellular location is the cytoplasm. In terms of biological role, associates with the EF-Tu.GDP complex and induces the exchange of GDP to GTP. It remains bound to the aminoacyl-tRNA.EF-Tu.GTP complex up to the GTP hydrolysis stage on the ribosome. The chain is Elongation factor Ts from Buchnera aphidicola subsp. Cinara cedri (strain Cc).